The sequence spans 213 residues: 2-dehydro-3-deoxy-phosphogluconate aldolase (213 aa).

Glutamate 45 (proton acceptor) is an active-site residue. Residues arginine 49, threonine 73, and lysine 133 each coordinate pyruvate. Lysine 133 serves as the catalytic Schiff-base intermediate with substrate.

This sequence belongs to the KHG/KDPG aldolase family. As to quaternary structure, homotrimer.

It localises to the cytoplasm. It catalyses the reaction 2-dehydro-3-deoxy-6-phospho-D-gluconate = D-glyceraldehyde 3-phosphate + pyruvate. It participates in carbohydrate acid metabolism; 2-dehydro-3-deoxy-D-gluconate degradation; D-glyceraldehyde 3-phosphate and pyruvate from 2-dehydro-3-deoxy-D-gluconate: step 2/2. Functionally, involved in the degradation of glucose via the Entner-Doudoroff pathway. Catalyzes the reversible, stereospecific retro-aldol cleavage of 2-keto-3-deoxy-6-phosphogluconate (KDPG) to pyruvate and D-glyceraldehyde-3-phosphate. The chain is 2-dehydro-3-deoxy-phosphogluconate aldolase (eda) from Dickeya dadantii (strain 3937) (Erwinia chrysanthemi (strain 3937)).